The primary structure comprises 158 residues: 6,7-dimethyl-8-ribityllumazine synthase (158 aa).

Residues F22, 56 to 58 (ALE), and 80 to 82 (VVI) contribute to the 5-amino-6-(D-ribitylamino)uracil site. (2S)-2-hydroxy-3-oxobutyl phosphate is bound at residue 85-86 (ET). The active-site Proton donor is H88. N113 lines the 5-amino-6-(D-ribitylamino)uracil pocket. R127 provides a ligand contact to (2S)-2-hydroxy-3-oxobutyl phosphate.

The protein belongs to the DMRL synthase family.

The enzyme catalyses (2S)-2-hydroxy-3-oxobutyl phosphate + 5-amino-6-(D-ribitylamino)uracil = 6,7-dimethyl-8-(1-D-ribityl)lumazine + phosphate + 2 H2O + H(+). It functions in the pathway cofactor biosynthesis; riboflavin biosynthesis; riboflavin from 2-hydroxy-3-oxobutyl phosphate and 5-amino-6-(D-ribitylamino)uracil: step 1/2. Functionally, catalyzes the formation of 6,7-dimethyl-8-ribityllumazine by condensation of 5-amino-6-(D-ribitylamino)uracil with 3,4-dihydroxy-2-butanone 4-phosphate. This is the penultimate step in the biosynthesis of riboflavin. This Neisseria gonorrhoeae (strain ATCC 700825 / FA 1090) protein is 6,7-dimethyl-8-ribityllumazine synthase.